The sequence spans 336 residues: Ketol-acid reductoisomerase (NADP(+)) 1 (336 aa).

One can recognise a KARI N-terminal Rossmann domain in the interval 2 to 181 (AKVYYEKDVT…GATRAGVLET (180 aa)). Residues 25–28 (YGSQ), arginine 48, serine 52, and 82–85 (DELQ) contribute to the NADP(+) site. Histidine 107 is an active-site residue. NADP(+) is bound at residue glycine 133. Residues 182 to 327 (TFKEETETDL…RKLREMMPFV (146 aa)) form the KARI C-terminal knotted domain. Mg(2+) is bound by residues aspartate 190, glutamate 194, glutamate 226, and glutamate 230. Residue serine 251 participates in substrate binding.

This sequence belongs to the ketol-acid reductoisomerase family. Mg(2+) serves as cofactor.

It carries out the reaction (2R)-2,3-dihydroxy-3-methylbutanoate + NADP(+) = (2S)-2-acetolactate + NADPH + H(+). The catalysed reaction is (2R,3R)-2,3-dihydroxy-3-methylpentanoate + NADP(+) = (S)-2-ethyl-2-hydroxy-3-oxobutanoate + NADPH + H(+). It participates in amino-acid biosynthesis; L-isoleucine biosynthesis; L-isoleucine from 2-oxobutanoate: step 2/4. Its pathway is amino-acid biosynthesis; L-valine biosynthesis; L-valine from pyruvate: step 2/4. Functionally, involved in the biosynthesis of branched-chain amino acids (BCAA). Catalyzes an alkyl-migration followed by a ketol-acid reduction of (S)-2-acetolactate (S2AL) to yield (R)-2,3-dihydroxy-isovalerate. In the isomerase reaction, S2AL is rearranged via a Mg-dependent methyl migration to produce 3-hydroxy-3-methyl-2-ketobutyrate (HMKB). In the reductase reaction, this 2-ketoacid undergoes a metal-dependent reduction by NADPH to yield (R)-2,3-dihydroxy-isovalerate. The polypeptide is Ketol-acid reductoisomerase (NADP(+)) 1 (Bacillus thuringiensis subsp. konkukian (strain 97-27)).